Here is a 339-residue protein sequence, read N- to C-terminus: Homeobox protein DBX2 (339 aa).

The segment at residues 186-245 (GILRRAVFSEDQRKALEKMFQKQKYISKTDRKKLAINLGLKESQVKIWFQNRRMKWRNSK) is a DNA-binding region (homeobox). Positions 282 to 318 (VPQQHSSPRWRENSPEPSERLIQESSGAPPPEANSLQ) are disordered. Positions 290–303 (RWRENSPEPSERLI) are enriched in basic and acidic residues.

This sequence belongs to the H2.0 homeobox family.

The protein localises to the nucleus. The chain is Homeobox protein DBX2 (DBX2) from Homo sapiens (Human).